The sequence spans 495 residues: IQ domain-containing protein IQM5 (495 aa).

Residues 89 to 122 (ENRGGEEEDERGSSPKRRNRGNLTALSLPAPTPF) are disordered. The IQ domain occupies 131–160 (LDAAAVTLQKVYKSYRTRRNLADCAVVVEE).

As to expression, expressed in roots, rosette and cauline leaves, and at lower levels in stems, flowers and siliques.

Its subcellular location is the cytoplasm. The protein localises to the nucleus. Functionally, may be involved in biotic and abiotic stress responses. The chain is IQ domain-containing protein IQM5 from Arabidopsis thaliana (Mouse-ear cress).